Here is a 236-residue protein sequence, read N- to C-terminus: 3-deoxy-D-manno-octulosonic acid kinase (236 aa).

Asp166 is a catalytic residue.

This sequence belongs to the protein kinase superfamily. KdkA/RfaP family.

The protein resides in the cell inner membrane. It catalyses the reaction an alpha-Kdo-(2-&gt;6)-lipid IVA + ATP = a 4-O-phospho-alpha-Kdo-(2-&gt;6)-lipid IVA + ADP + H(+). Its pathway is bacterial outer membrane biogenesis; LPS core biosynthesis. Its function is as follows. Catalyzes the ATP-dependent phosphorylation of the 3-deoxy-D-manno-octulosonic acid (Kdo) residue in Kdo-lipid IV(A) at the 4-OH position. This chain is 3-deoxy-D-manno-octulosonic acid kinase, found in Photobacterium profundum (strain SS9).